A 238-amino-acid polypeptide reads, in one-letter code: Ribonuclease 3 (238 aa).

Residues I4–G130 enclose the RNase III domain. E45 provides a ligand contact to Mg(2+). The active site involves D49. Mg(2+) is bound by residues D116 and E119. E119 is an active-site residue. The region spanning D154–K222 is the DRBM domain. Residues Q215–Q238 form a disordered region. Residues K222 to Q238 are compositionally biased toward basic and acidic residues.

This sequence belongs to the ribonuclease III family. In terms of assembly, homodimer. Mg(2+) is required as a cofactor.

The protein resides in the cytoplasm. The enzyme catalyses Endonucleolytic cleavage to 5'-phosphomonoester.. Its function is as follows. Digests double-stranded RNA. Involved in the processing of primary rRNA transcript to yield the immediate precursors to the large and small rRNAs (23S and 16S). Processes some mRNAs, and tRNAs when they are encoded in the rRNA operon. Processes pre-crRNA and tracrRNA of type II CRISPR loci if present in the organism. This Onion yellows phytoplasma (strain OY-M) protein is Ribonuclease 3.